Here is a 113-residue protein sequence, read N- to C-terminus: uncharacterized protein (113 aa).

An N-terminal signal peptide occupies residues methionine 1 to alanine 38.

This is an uncharacterized protein from Haemophilus influenzae (strain ATCC 51907 / DSM 11121 / KW20 / Rd).